Here is a 74-residue protein sequence, read N- to C-terminus: Cecropin-P3 (74 aa).

An N-terminal signal peptide occupies residues 1–13 (MFLIYLLVQTAES). Residues 45–74 (RRRSVGEEDAIPSHIEVNKFFLRKPAKEHI) constitute a propeptide, removed in mature form.

The protein belongs to the cecropin family. As to expression, expressed in the body wall, intestine, uterus and ovary.

It is found in the secreted. Its function is as follows. Has antibacterial activity against several Gram-positive and Gram-negative bacteria. Is weakly active against yeasts. Acts by a nonpore mechanism. In Ascaris suum (Pig roundworm), this protein is Cecropin-P3 (ASCEC-3).